The primary structure comprises 320 residues: Cytochrome f (320 aa).

The signal sequence occupies residues 1–35 (MQNRNTFSWVKEEMTRFISVSIMIYVITRTSISNA). Heme-binding residues include tyrosine 36, cysteine 56, cysteine 59, and histidine 60. A helical transmembrane segment spans residues 286–306 (VQGLLFFLASVILAQIFLVLK).

Belongs to the cytochrome f family. As to quaternary structure, the 4 large subunits of the cytochrome b6-f complex are cytochrome b6, subunit IV (17 kDa polypeptide, petD), cytochrome f and the Rieske protein, while the 4 small subunits are PetG, PetL, PetM and PetN. The complex functions as a dimer. It depends on heme as a cofactor.

The protein resides in the plastid. The protein localises to the chloroplast thylakoid membrane. Component of the cytochrome b6-f complex, which mediates electron transfer between photosystem II (PSII) and photosystem I (PSI), cyclic electron flow around PSI, and state transitions. The chain is Cytochrome f from Calycanthus floridus var. glaucus (Eastern sweetshrub).